Consider the following 199-residue polypeptide: Holliday junction branch migration complex subunit RuvA (199 aa).

Residues 1–64 (MIGRITGILL…EDGHFLYGFA (64 aa)) are domain I. Residues 65 to 143 (SADERAAFRQ…RALPGFGAST (79 aa)) form a domain II region. The interval 144-152 (VPGAAAQPA) is flexible linker. The segment at 152 to 199 (ADSRSDILNALLALGYSDKEAQSALKAIPPETGVSDGIRQALKLLSKA) is domain III.

Belongs to the RuvA family. As to quaternary structure, homotetramer. Forms an RuvA(8)-RuvB(12)-Holliday junction (HJ) complex. HJ DNA is sandwiched between 2 RuvA tetramers; dsDNA enters through RuvA and exits via RuvB. An RuvB hexamer assembles on each DNA strand where it exits the tetramer. Each RuvB hexamer is contacted by two RuvA subunits (via domain III) on 2 adjacent RuvB subunits; this complex drives branch migration. In the full resolvosome a probable DNA-RuvA(4)-RuvB(12)-RuvC(2) complex forms which resolves the HJ.

It localises to the cytoplasm. The RuvA-RuvB-RuvC complex processes Holliday junction (HJ) DNA during genetic recombination and DNA repair, while the RuvA-RuvB complex plays an important role in the rescue of blocked DNA replication forks via replication fork reversal (RFR). RuvA specifically binds to HJ cruciform DNA, conferring on it an open structure. The RuvB hexamer acts as an ATP-dependent pump, pulling dsDNA into and through the RuvAB complex. HJ branch migration allows RuvC to scan DNA until it finds its consensus sequence, where it cleaves and resolves the cruciform DNA. This chain is Holliday junction branch migration complex subunit RuvA, found in Aromatoleum aromaticum (strain DSM 19018 / LMG 30748 / EbN1) (Azoarcus sp. (strain EbN1)).